A 282-amino-acid chain; its full sequence is MRTEKEILNLVSEFAYQRSNVKIIALEGSRTNENIKKDKFQDYDFAFFVSDIEYFTHEESWLSLFGELLFIQKPEDMELFPPDLDYGYSYIMYFKDGIKMDITLINLKDLNRYFSDSDGLVKILVDKDNLVTQEIVPDDSNYWLKKPTEREFYDCCNEFWSVSTYVAKGVFRREILFALDHFNNILRPELLRMISWYIGFNRGFDFSLGKNYKFINKYLTDKEFNMLLATFEMNGYRKTYQSFKLCCELFKYYSNKVSCLGNYNYPNYEKNIENFIRNNYEN.

It carries out the reaction streptomycin + ATP = 6-O-adenylylstreptomycin + diphosphate. Its function is as follows. Required for streptomycin resistance. Adenylates streptomycin on the O-6 residue. The polypeptide is Aminoglycoside 6-adenylyltransferase (Staphylococcus aureus).